The following is a 403-amino-acid chain: Ribosomal RNA large subunit methyltransferase I (403 aa).

A PUA domain is found at 9-88 (YPRLVLSKGR…ESIDIAFFTR (80 aa)).

This sequence belongs to the methyltransferase superfamily. RlmI family.

The protein resides in the cytoplasm. It carries out the reaction cytidine(1962) in 23S rRNA + S-adenosyl-L-methionine = 5-methylcytidine(1962) in 23S rRNA + S-adenosyl-L-homocysteine + H(+). Specifically methylates the cytosine at position 1962 (m5C1962) of 23S rRNA. This Salmonella newport (strain SL254) protein is Ribosomal RNA large subunit methyltransferase I.